A 339-amino-acid polypeptide reads, in one-letter code: Holliday junction branch migration complex subunit RuvB (339 aa).

The tract at residues 1 to 187 is large ATPase domain (RuvB-L); sequence MQGFEDENRI…FGVICKLDYY (187 aa). ATP is bound by residues Leu-26, Arg-27, Gly-68, Lys-71, Thr-72, Thr-73, 134-136, Arg-177, Tyr-187, and Arg-224; that span reads EDF. Thr-72 contributes to the Mg(2+) binding site. The segment at 188 to 258 is small ATPAse domain (RuvB-S); that stretch reads TVDELSKIVL…VAKDALELLG (71 aa). A head domain (RuvB-H) region spans residues 261-339; the sequence is SLGLDFVDEK…HLKIPYPNEK (79 aa). The DNA site is built by Arg-297, Arg-316, and Arg-321.

This sequence belongs to the RuvB family. As to quaternary structure, homohexamer. Forms an RuvA(8)-RuvB(12)-Holliday junction (HJ) complex. HJ DNA is sandwiched between 2 RuvA tetramers; dsDNA enters through RuvA and exits via RuvB. An RuvB hexamer assembles on each DNA strand where it exits the tetramer. Each RuvB hexamer is contacted by two RuvA subunits (via domain III) on 2 adjacent RuvB subunits; this complex drives branch migration. In the full resolvosome a probable DNA-RuvA(4)-RuvB(12)-RuvC(2) complex forms which resolves the HJ.

It is found in the cytoplasm. It catalyses the reaction ATP + H2O = ADP + phosphate + H(+). Functionally, the RuvA-RuvB-RuvC complex processes Holliday junction (HJ) DNA during genetic recombination and DNA repair, while the RuvA-RuvB complex plays an important role in the rescue of blocked DNA replication forks via replication fork reversal (RFR). RuvA specifically binds to HJ cruciform DNA, conferring on it an open structure. The RuvB hexamer acts as an ATP-dependent pump, pulling dsDNA into and through the RuvAB complex. RuvB forms 2 homohexamers on either side of HJ DNA bound by 1 or 2 RuvA tetramers; 4 subunits per hexamer contact DNA at a time. Coordinated motions by a converter formed by DNA-disengaged RuvB subunits stimulates ATP hydrolysis and nucleotide exchange. Immobilization of the converter enables RuvB to convert the ATP-contained energy into a lever motion, pulling 2 nucleotides of DNA out of the RuvA tetramer per ATP hydrolyzed, thus driving DNA branch migration. The RuvB motors rotate together with the DNA substrate, which together with the progressing nucleotide cycle form the mechanistic basis for DNA recombination by continuous HJ branch migration. Branch migration allows RuvC to scan DNA until it finds its consensus sequence, where it cleaves and resolves cruciform DNA. The chain is Holliday junction branch migration complex subunit RuvB from Clostridioides difficile (strain 630) (Peptoclostridium difficile).